A 73-amino-acid chain; its full sequence is MPKICQITKKKSMLGQNRSHAMNATKKKFSLNIQYHTFWLPEKKKKIRIRITKKGIRMINKFGISKIYKKYII.

It belongs to the bacterial ribosomal protein bL28 family.

The chain is Large ribosomal subunit protein bL28 from Buchnera aphidicola subsp. Cinara cedri (strain Cc).